A 66-amino-acid chain; its full sequence is Ribosome biogenesis protein Nop10 (66 aa).

It belongs to the NOP10 family.

In terms of biological role, involved in ribosome biogenesis; more specifically in 18S rRNA pseudouridylation and in cleavage of pre-rRNA. The protein is Ribosome biogenesis protein Nop10 of Desulfurococcus amylolyticus (strain DSM 18924 / JCM 16383 / VKM B-2413 / 1221n) (Desulfurococcus kamchatkensis).